The following is a 162-amino-acid chain: Peptide deformylase-like (162 aa).

Belongs to the polypeptide deformylase family.

This Staphylococcus aureus (strain COL) protein is Peptide deformylase-like.